Reading from the N-terminus, the 156-residue chain is Small ribosomal subunit protein bS6 (156 aa).

Residues 98–156 (GHDFRDQRSHHGQAGEFRKREPQQKSKEQSEFSKEKKSFSKSVTKKTVVSKPKETKEEK) form a disordered region. The span at 113–135 (EFRKREPQQKSKEQSEFSKEKKS) shows a compositional bias: basic and acidic residues. The segment covering 137-147 (SKSVTKKTVVS) has biased composition (low complexity).

Belongs to the bacterial ribosomal protein bS6 family.

Binds together with bS18 to 16S ribosomal RNA. The chain is Small ribosomal subunit protein bS6 from Mycoplasmopsis synoviae (strain 53) (Mycoplasma synoviae).